A 563-amino-acid polypeptide reads, in one-letter code: uncharacterized protein (563 aa).

Residues M1–G13 lie on the Cytoplasmic side of the membrane. Residues I14–F34 traverse the membrane as a helical segment. The Lumenal segment spans residues P35–T528. Residues N43, N112, N133, N188, N265, N295, N315, and N502 are each glycosylated (N-linked (GlcNAc...) asparagine). A helical membrane pass occupies residues I529 to I549. The Cytoplasmic portion of the chain corresponds to V550–S563.

Belongs to the CD36 family.

The protein resides in the membrane. This is an uncharacterized protein from Caenorhabditis elegans.